A 93-amino-acid polypeptide reads, in one-letter code: Alpha-defensin 22 (93 aa).

The signal sequence occupies residues 1–19 (MKKLVLLSALVLLAYQVQT). Residues 20 to 58 (DPIQNTDEETNTEEQPGEEDQAVSVSFGGQEGSALHEKL) constitute a propeptide that is removed on maturation. A disordered region spans residues 22-41 (IQNTDEETNTEEQPGEEDQA). Positions 25–40 (TDEETNTEEQPGEEDQ) are enriched in acidic residues. Intrachain disulfides connect cysteine 64–cysteine 89, cysteine 66–cysteine 81, and cysteine 71–cysteine 88.

Belongs to the alpha-defensin family.

It localises to the secreted. In terms of biological role, may have microbicidal activities. The sequence is that of Alpha-defensin 22 (Defa22) from Mus musculus (Mouse).